We begin with the raw amino-acid sequence, 376 residues long: N-acetyldiaminopimelate deacetylase (376 aa).

Residue Asp-70 is part of the active site. Catalysis depends on Glu-129, which acts as the Proton acceptor.

This sequence belongs to the peptidase M20A family. N-acetyldiaminopimelate deacetylase subfamily.

The enzyme catalyses N-acetyl-(2S,6S)-2,6-diaminopimelate + H2O = (2S,6S)-2,6-diaminopimelate + acetate. Its pathway is amino-acid biosynthesis; L-lysine biosynthesis via DAP pathway; LL-2,6-diaminopimelate from (S)-tetrahydrodipicolinate (acetylase route): step 3/3. Its function is as follows. Catalyzes the conversion of N-acetyl-diaminopimelate to diaminopimelate and acetate. The polypeptide is N-acetyldiaminopimelate deacetylase (Bacillus pumilus (strain SAFR-032)).